A 158-amino-acid polypeptide reads, in one-letter code: NAD(P)H-quinone oxidoreductase subunit J, chloroplastic (158 aa).

It belongs to the complex I 30 kDa subunit family. NDH is composed of at least 16 different subunits, 5 of which are encoded in the nucleus.

The protein resides in the plastid. Its subcellular location is the chloroplast thylakoid membrane. The catalysed reaction is a plastoquinone + NADH + (n+1) H(+)(in) = a plastoquinol + NAD(+) + n H(+)(out). It carries out the reaction a plastoquinone + NADPH + (n+1) H(+)(in) = a plastoquinol + NADP(+) + n H(+)(out). NDH shuttles electrons from NAD(P)H:plastoquinone, via FMN and iron-sulfur (Fe-S) centers, to quinones in the photosynthetic chain and possibly in a chloroplast respiratory chain. The immediate electron acceptor for the enzyme in this species is believed to be plastoquinone. Couples the redox reaction to proton translocation, and thus conserves the redox energy in a proton gradient. This is NAD(P)H-quinone oxidoreductase subunit J, chloroplastic from Daucus carota (Wild carrot).